The following is a 122-amino-acid chain: Large ribosomal subunit protein uL14 (122 aa).

It belongs to the universal ribosomal protein uL14 family. As to quaternary structure, part of the 50S ribosomal subunit. Forms a cluster with proteins L3 and L19. In the 70S ribosome, L14 and L19 interact and together make contacts with the 16S rRNA in bridges B5 and B8.

Binds to 23S rRNA. Forms part of two intersubunit bridges in the 70S ribosome. This Rickettsia typhi (strain ATCC VR-144 / Wilmington) protein is Large ribosomal subunit protein uL14.